Here is a 424-residue protein sequence, read N- to C-terminus: Gamma-glutamyl phosphate reductase (424 aa).

This sequence belongs to the gamma-glutamyl phosphate reductase family.

It localises to the cytoplasm. The catalysed reaction is L-glutamate 5-semialdehyde + phosphate + NADP(+) = L-glutamyl 5-phosphate + NADPH + H(+). Its pathway is amino-acid biosynthesis; L-proline biosynthesis; L-glutamate 5-semialdehyde from L-glutamate: step 2/2. Its function is as follows. Catalyzes the NADPH-dependent reduction of L-glutamate 5-phosphate into L-glutamate 5-semialdehyde and phosphate. The product spontaneously undergoes cyclization to form 1-pyrroline-5-carboxylate. The polypeptide is Gamma-glutamyl phosphate reductase (Dehalococcoides mccartyi (strain ATCC BAA-2100 / JCM 16839 / KCTC 5957 / BAV1)).